The sequence spans 285 residues: 3-methyl-2-oxobutanoate hydroxymethyltransferase 1 (285 aa).

Mg(2+) is bound by residues Asp49 and Asp88. 3-methyl-2-oxobutanoate-binding positions include 49–50 (DS), Asp88, and Lys118. Glu120 contributes to the Mg(2+) binding site. The Proton acceptor role is filled by Glu187.

This sequence belongs to the PanB family. Homodecamer; pentamer of dimers. It depends on Mg(2+) as a cofactor.

It localises to the cytoplasm. The enzyme catalyses 3-methyl-2-oxobutanoate + (6R)-5,10-methylene-5,6,7,8-tetrahydrofolate + H2O = 2-dehydropantoate + (6S)-5,6,7,8-tetrahydrofolate. The protein operates within cofactor biosynthesis; (R)-pantothenate biosynthesis; (R)-pantoate from 3-methyl-2-oxobutanoate: step 1/2. Catalyzes the reversible reaction in which hydroxymethyl group from 5,10-methylenetetrahydrofolate is transferred onto alpha-ketoisovalerate to form ketopantoate. The protein is 3-methyl-2-oxobutanoate hydroxymethyltransferase 1 of Burkholderia lata (strain ATCC 17760 / DSM 23089 / LMG 22485 / NCIMB 9086 / R18194 / 383).